The chain runs to 878 residues: Vacuolar membrane protease (878 aa).

The Cytoplasmic portion of the chain corresponds to 1-16 (MASLRLPRANPLAFTR). A helical transmembrane segment spans residues 17-37 (WPVTVITAIVYLALLIPLLVV). Residues 38 to 390 (HHVVPSAPSS…STFVLFQLHT (353 aa)) are Vacuolar-facing. N-linked (GlcNAc...) asparagine glycans are attached at residues Asn-53 and Asn-119. Zn(2+)-binding residues include His-174 and Asp-186. Residue Glu-220 is the Proton acceptor of the active site. Zn(2+) is bound by residues Glu-221, Glu-246, and His-319. Residues 391 to 411 (LFALLVTLLIVGPLTLLFTSI) traverse the membrane as a helical segment. Residues 412-442 (ALTKADKMYLFRSSAKSEDRLDVVPLQGLRG) are Cytoplasmic-facing. A helical transmembrane segment spans residues 443–463 (FFRFPFLFGIPTVVTVGLAYL). Residues 464–473 (VTKVNPYIIH) lie on the Vacuolar side of the membrane. The chain crosses the membrane as a helical span at residues 474 to 494 (SSAYAVWSMMVAAWVFLAWFV). At 495 to 508 (SRVADFARPSAFHR) the chain is on the cytoplasmic side. Residues 509 to 529 (IYTLTWMYVLSWVSAVIATVY) form a helical membrane-spanning segment. The Vacuolar portion of the chain corresponds to 530-533 (ANQR). The chain crosses the membrane as a helical span at residues 534-554 (GLAGGYFIFFFHAGIFLATWI). Over 555-659 (SYLELFALPS…ALPKWTWGLQ (105 aa)) the chain is Cytoplasmic. Residues 577–590 (GRASGHGSRRGTTS) are compositionally biased toward low complexity. The tract at residues 577–611 (GRASGHGSRRGTTSGEDDGEEAEEEPTESTSLLGS) is disordered. A compositionally biased stretch (acidic residues) spans 591 to 603 (GEDDGEEAEEEPT). The chain crosses the membrane as a helical span at residues 660–680 (LLLTAPITLIMVGPLALLTIS). Residues 681-693 (AISQTGQDGGHPL) are Vacuolar-facing. Residues 694–714 (FAYVAIAIFTTIMLTPLLPFI) form a helical membrane-spanning segment. The Cytoplasmic portion of the chain corresponds to 715–721 (HRYTYHV). Residues 722–742 (PLFLLAVFLGTLIYNLVAFPF) form a helical membrane-spanning segment. The Vacuolar segment spans residues 743 to 878 (SDSNRLKLYY…RRAFEIGNDD (136 aa)).

Belongs to the peptidase M28 family. The cofactor is Zn(2+).

It is found in the vacuole membrane. Functionally, may be involved in vacuolar sorting and osmoregulation. The chain is Vacuolar membrane protease from Aspergillus flavus (strain ATCC 200026 / FGSC A1120 / IAM 13836 / NRRL 3357 / JCM 12722 / SRRC 167).